The primary structure comprises 223 residues: Endonuclease V (223 aa).

Residues Asp-35 and Asp-103 each coordinate Mg(2+).

It belongs to the endonuclease V family. Mg(2+) is required as a cofactor.

It localises to the cytoplasm. It carries out the reaction Endonucleolytic cleavage at apurinic or apyrimidinic sites to products with a 5'-phosphate.. DNA repair enzyme involved in the repair of deaminated bases. Selectively cleaves double-stranded DNA at the second phosphodiester bond 3' to a deoxyinosine leaving behind the intact lesion on the nicked DNA. The polypeptide is Endonuclease V (Shigella dysenteriae serotype 1 (strain Sd197)).